Reading from the N-terminus, the 448-residue chain is Acetate kinase (448 aa).

Asn-7 is a binding site for Mg(2+). Residue Lys-14 coordinates ATP. Arg-91 lines the substrate pocket. The Proton donor/acceptor role is filled by Asp-148. ATP is bound by residues 208 to 212 (HIGNG) and 283 to 285 (DRR). Residue Glu-388 coordinates Mg(2+).

Belongs to the acetokinase family. As to quaternary structure, homodimer. It depends on Mg(2+) as a cofactor. Mn(2+) is required as a cofactor.

The protein localises to the cytoplasm. The enzyme catalyses acetate + ATP = acetyl phosphate + ADP. The protein operates within metabolic intermediate biosynthesis; acetyl-CoA biosynthesis; acetyl-CoA from acetate: step 1/2. Functionally, catalyzes the formation of acetyl phosphate from acetate and ATP. Can also catalyze the reverse reaction. This chain is Acetate kinase, found in Treponema pallidum (strain Nichols).